Consider the following 517-residue polypeptide: Putative lipase ATG15 (517 aa).

Residues 1–6 lie on the Cytoplasmic side of the membrane; it reads MRASTH. The chain crosses the membrane as a helical; Signal-anchor for type II membrane protein span at residues 7-27; sequence SWLLLVVVLSLSSFTVNAVIL. Over 28–517 the chain is Lumenal; that stretch reads EGLIPPRSHL…TNWHFTDETL (490 aa). Residues asparagine 187, asparagine 221, and asparagine 303 are each glycosylated (N-linked (GlcNAc...) asparagine). The Charge relay system role is filled by serine 319. The segment at 466–499 is disordered; it reads GWRWPWHRGDSADDDGDSDEDTDEDDKLAVPKAR. A compositionally biased stretch (acidic residues) spans 477–491; it reads ADDDGDSDEDTDEDD.

This sequence belongs to the AB hydrolase superfamily. Lipase family. Binds to both phosphatidylinositol (PI) and phosphatidylinositol 3,5-bisphosphate (PIP2).

The protein resides in the endosome. The protein localises to the multivesicular body membrane. Its subcellular location is the prevacuolar compartment membrane. The enzyme catalyses a triacylglycerol + H2O = a diacylglycerol + a fatty acid + H(+). Its function is as follows. Lipase which is essential for lysis of subvacuolar cytoplasm to vacuole targeted bodies and intravacuolar autophagic bodies. Involved in the lysis of intravacuolar multivesicular body (MVB) vesicles. The intravacuolar membrane disintegration by ATG15 is critical to life span extension. This chain is Putative lipase ATG15 (ATG15), found in Mycosarcoma maydis (Corn smut fungus).